Reading from the N-terminus, the 205-residue chain is Polyamine-modulated factor 1 (205 aa).

The tract at residues 1–30 is disordered; the sequence is MAEASSANLGSGCEEKRHEGSSSESVPPGT. The stretch at 141–193 forms a coiled coil; that stretch reads FLQQRDTLRRHVQKQEAENQQLADAVLAGRRQVEELQLQVQAQQQAWQALHRE.

In terms of assembly, component of the MIS12 complex composed of MIS12, DSN1, NSL1 and PMF1. Interacts with COPS7A. Interacts via its coiled-coil domain with the leucine-zipper domain of NFE2L2. The interaction with NFE2L2 is required for the transcriptional regulation of SSAT. As to expression, highest levels of expression in heart and skeletal muscle, with significant levels expressed in kidney and liver.

It localises to the nucleus. The protein localises to the chromosome. It is found in the centromere. Its subcellular location is the kinetochore. Part of the MIS12 complex which is required for normal chromosome alignment and segregation and kinetochore formation during mitosis. May act as a cotranscription partner of NFE2L2 involved in regulation of polyamine-induced transcription of SSAT. The polypeptide is Polyamine-modulated factor 1 (Homo sapiens (Human)).